Here is a 349-residue protein sequence, read N- to C-terminus: Short-wave-sensitive opsin 1 (349 aa).

The Extracellular segment spans residues methionine 1–alanine 34. N-linked (GlcNAc...) asparagine glycosylation is present at asparagine 15. A helical transmembrane segment spans residues phenylalanine 35–alanine 59. The Cytoplasmic portion of the chain corresponds to threonine 60–asparagine 71. A helical transmembrane segment spans residues tyrosine 72–cysteine 97. Residues tyrosine 98 to glutamate 111 lie on the Extracellular side of the membrane. Cysteine 108 and cysteine 185 are disulfide-bonded. A helical membrane pass occupies residues alanine 112–phenylalanine 131. At glutamate 132–histidine 150 the chain is on the cytoplasmic side. A helical membrane pass occupies residues alanine 151–serine 174. At arginine 175–tyrosine 200 the chain is on the extracellular side. The chain crosses the membrane as a helical span at residues tyrosine 201–leucine 228. At arginine 229 to histidine 250 the chain is on the cytoplasmic side. Residues methionine 251–valine 274 form a helical membrane-spanning segment. Over asparagine 275–aspartate 282 the chain is Extracellular. A helical membrane pass occupies residues leucine 283–methionine 307. Lysine 294 is subject to N6-(retinylidene)lysine. Topologically, residues asparagine 308–asparagine 349 are cytoplasmic. The segment at glutamate 327 to asparagine 349 is disordered. The segment covering leucine 330–asparagine 349 has biased composition (polar residues).

This sequence belongs to the G-protein coupled receptor 1 family. Opsin subfamily. Phosphorylated on some or all of the serine and threonine residues present in the C-terminal region.

The protein resides in the cell membrane. The protein localises to the photoreceptor inner segment. Its subcellular location is the cell projection. It is found in the cilium. It localises to the photoreceptor outer segment. The protein resides in the cytoplasm. The protein localises to the perinuclear region. Visual pigments are the light-absorbing molecules that mediate vision. They consist of an apoprotein, opsin, covalently linked to cis-retinal. Required for the maintenance of cone outer segment organization in the ventral retina, but not essential for the maintenance of functioning cone photoreceptors. Involved in ensuring correct abundance and localization of retinal membrane proteins. May increase spectral sensitivity in dim light. This is Short-wave-sensitive opsin 1 (OPN1SW) from Bos taurus (Bovine).